Here is a 398-residue protein sequence, read N- to C-terminus: Tryptophan synthase beta chain (398 aa).

Position 88 is an N6-(pyridoxal phosphate)lysine (Lys88).

It belongs to the TrpB family. As to quaternary structure, tetramer of two alpha and two beta chains. Pyridoxal 5'-phosphate is required as a cofactor.

It carries out the reaction (1S,2R)-1-C-(indol-3-yl)glycerol 3-phosphate + L-serine = D-glyceraldehyde 3-phosphate + L-tryptophan + H2O. Its pathway is amino-acid biosynthesis; L-tryptophan biosynthesis; L-tryptophan from chorismate: step 5/5. Its function is as follows. The beta subunit is responsible for the synthesis of L-tryptophan from indole and L-serine. The protein is Tryptophan synthase beta chain of Mannheimia succiniciproducens (strain KCTC 0769BP / MBEL55E).